Reading from the N-terminus, the 351-residue chain is D-alanine--D-alanine ligase (351 aa).

An ATP-grasp domain is found at lysine 135 to glutamine 344. An ATP-binding site is contributed by glutamate 171–glutamate 226. Mg(2+) is bound by residues aspartate 297, glutamate 311, and asparagine 313.

Belongs to the D-alanine--D-alanine ligase family. Requires Mg(2+) as cofactor. The cofactor is Mn(2+).

The protein resides in the cytoplasm. The enzyme catalyses 2 D-alanine + ATP = D-alanyl-D-alanine + ADP + phosphate + H(+). It functions in the pathway cell wall biogenesis; peptidoglycan biosynthesis. Cell wall formation. The chain is D-alanine--D-alanine ligase from Rippkaea orientalis (strain PCC 8801 / RF-1) (Cyanothece sp. (strain PCC 8801)).